The following is a 97-amino-acid chain: DNA/RNA-binding protein Alba (97 aa).

Lysine 15 carries the N6-acetyllysine modification.

It belongs to the histone-like Alba family. Acetylated. Acetylation at Lys-15 decreases DNA-binding affinity.

Its subcellular location is the cytoplasm. It localises to the chromosome. Binds double-stranded DNA tightly but without sequence specificity. Involved in DNA compaction. This chain is DNA/RNA-binding protein Alba, found in Sulfolobus acidocaldarius (strain ATCC 33909 / DSM 639 / JCM 8929 / NBRC 15157 / NCIMB 11770).